A 105-amino-acid polypeptide reads, in one-letter code: Putative membrane protein insertion efficiency factor (105 aa).

Belongs to the UPF0161 family.

Its subcellular location is the cell inner membrane. In terms of biological role, could be involved in insertion of integral membrane proteins into the membrane. This is Putative membrane protein insertion efficiency factor from Nitratidesulfovibrio vulgaris (strain DSM 19637 / Miyazaki F) (Desulfovibrio vulgaris).